The primary structure comprises 370 residues: Peptidyl-prolyl cis-trans isomerase D (370 aa).

At Ser-5 the chain carries Phosphoserine. The region spanning Phe-19–Glu-183 is the PPIase cyclophilin-type domain. Residue Lys-171 is modified to N6-acetyllysine. The interval Lys-185–Asp-215 is chaperone activity. Ser-198 is subject to Phosphoserine. The interaction with HSP90AB1 stretch occupies residues Lys-214 to Ala-370. TPR repeat units lie at residues Ser-223–Ser-256, Leu-273–Asn-306, and Thr-307–Asp-340.

This sequence belongs to the cyclophilin-type PPIase family. PPIase D subfamily. Identified in ESR1 or NR3C1/GCR steroid receptor-chaperone complexes. Found in HSP90 chaperone complexes with kinase clients LCK or EIF2AK1. Two monomers associate with one HSP90 homodimer. Interacts with HSP90AA1. Interacts with HSP90AB1; PPID and FKBP4 compete for binding to HSP90AB1 and the interaction is mutually exclusive with the PPID:HSPA8 interaction. Interacts with HSPA8; PPID and STIP1 but not FKBP4 compete for binding to HSPA8 and the interaction is mutually exclusive with the PPID:HSP90AB1 interaction. Interacts with S100A1 and S100A2; the interactions dissociate the PPID:HSP90AA1 interaction. Interacts with S100A6. Interacts with MYB, ILF2, XRCC6, RACK1 and RPS3. Interacts with cytoplasmic dynein 1 intermediate chain (DYNC1I1 or DYNC1I2).

It is found in the cytoplasm. The protein localises to the nucleus. The protein resides in the nucleolus. Its subcellular location is the nucleoplasm. The enzyme catalyses [protein]-peptidylproline (omega=180) = [protein]-peptidylproline (omega=0). With respect to regulation, less sensitive to inhibition by cyclosporin A than is CYP-18. Functionally, PPIase that catalyzes the cis-trans isomerization of proline imidic peptide bonds in oligopeptides and may therefore assist protein folding. Proposed to act as a co-chaperone in HSP90 complexes such as in unligated steroid receptors heterocomplexes. Different co-chaperones seem to compete for association with HSP90 thus establishing distinct HSP90-co-chaperone-receptor complexes with the potential to exert tissue-specific receptor activity control. May have a preference for estrogen receptor complexes and is not found in glucocorticoid receptor complexes. May be involved in cytoplasmic dynein-dependent movement of the receptor from the cytoplasm to the nucleus. May regulate MYB by inhibiting its DNA-binding activity. Involved in regulation of AHR signaling by promoting the formation of the AHR:ARNT dimer; the function is independent of HSP90 but requires the chaperone activity region. Involved in regulation of UV radiation-induced apoptosis. The chain is Peptidyl-prolyl cis-trans isomerase D from Mus musculus (Mouse).